A 724-amino-acid chain; its full sequence is MRRLHRNLSLLFLICILNEYRIESQTLSPPITDRFKCLTNGCCDHHEWCRFWASIGECNANKDWMTENCQLACGTCTAPAAPLLPVTTTASSFNGGGFVQTTTQSSGPTTTITIPPSSLTSVTSCERVKDSIAQASELMSISRLINPVEDNFGRNMLSIDDITRSVPTGCVPQLSDVGVDCRKSLCYHLMYRTLDGTCNNLEKPMQGAAFRRFNRHFPAQYDDGKGEPISSLNQSRPSAREANRVMLSSAQSVVHDKFNNMMMQWGQFMSHDMSKTTLQPSANCKTCDPVPSKCMPIPIGEKDPNLGFKSKQCLKVSRSAPICRVEPREQLNENTAYIDGSMIYGSSLKDLHKFRDGRTGFLRVTRFNNQNVLPFDQSKCANKDKCTASFTAGDIRANLFIGLSSLHIMFAREHNRIAQKLTELNPTWSGDRVFQEARKIVGAQIQNVLYKEYLPKLLGVSFDKVIGPYKGYDTNVDATIANEFTTSAFRFGHGMIEEFYKRVDLSGNNITHGGFFFGDGVFKSGKILFEGGVDPIIRGFMTTAVKRPHRMTPAITEKMFGSTDLGSLNIQRGRDHGIPSYNKMRQFCGLKSANTFDDFADMILDRNLRAGLARNYNTTNDVDFYVGSMLEDPVIGGLVGTTLSCAIGEQFKRARDGDRFYFENPGIFTRSQMEEIKKSSLSRIICDNADNFELVSQDAFLLPGSNLTPCSKIPKMDLSKWRAL.

Positions 1–24 (MRRLHRNLSLLFLICILNEYRIES) are cleaved as a signal peptide. Asn-7 carries N-linked (GlcNAc...) asparagine glycosylation. The propeptide occupies 25 to 178 (QTLSPPITDR…GCVPQLSDVG (154 aa)). The ShKT domain occupies 42-76 (CCDHHEWCRFWASIGECNANKDWMTENCQLACGTC). Cys-181 and Cys-198 are joined by a disulfide. A glycan (N-linked (GlcNAc...) asparagine) is linked at Asn-233. Catalysis depends on His-271, which acts as the Proton acceptor. Position 272 (Asp-272) interacts with Ca(2+). The cysteines at positions 284 and 294 are disulfide-linked. 4 residues coordinate Ca(2+): Thr-335, Tyr-337, Asp-339, and Ser-341. Residue His-493 participates in heme b binding. N-linked (GlcNAc...) asparagine glycans are attached at residues Asn-509 and Asn-617. 2 cysteine pairs are disulfide-bonded: Cys-588–Cys-645 and Cys-686–Cys-710.

Belongs to the peroxidase family. Heme b serves as cofactor. As to expression, expressed in the hypodermal cells, specifically the head and seam/body.

It catalyses the reaction 2 a phenolic donor + H2O2 = 2 a phenolic radical donor + 2 H2O. Functionally, plays an essential role in cuticle biogenesis. Required in combination with bli-3 for correct formation of cross-links in cuticle collagens. In Caenorhabditis elegans, this protein is Peroxidase mlt-7.